The sequence spans 37 residues: Large ribosomal subunit protein bL36c (37 aa).

This sequence belongs to the bacterial ribosomal protein bL36 family.

The protein localises to the plastid. Its subcellular location is the chloroplast. This chain is Large ribosomal subunit protein bL36c, found in Psilotum nudum (Whisk fern).